Consider the following 258-residue polypeptide: UPF0758 protein BamMC406_2419 (258 aa).

A disordered region spans residues 13 to 42 (CRDPADAPAAPARHTGPARPRKRRPRNWKP). Basic residues predominate over residues 31 to 42 (RPRKRRPRNWKP). The MPN domain occupies 136-258 (QIDSPGAVED…TFSFARAGWL (123 aa)). Zn(2+) contacts are provided by histidine 207, histidine 209, and aspartate 220. The JAMM motif motif lies at 207–220 (HNHPSGAVQPSAED).

It belongs to the UPF0758 family.

This Burkholderia ambifaria (strain MC40-6) protein is UPF0758 protein BamMC406_2419.